The following is a 259-amino-acid chain: Ribonuclease HII (259 aa).

Residues 72–259 (ERIAGIDEAG…PVREALGVQS (188 aa)) enclose the RNase H type-2 domain. A divalent metal cation is bound by residues aspartate 78, glutamate 79, and aspartate 170.

It belongs to the RNase HII family. Mn(2+) is required as a cofactor. The cofactor is Mg(2+).

It is found in the cytoplasm. It catalyses the reaction Endonucleolytic cleavage to 5'-phosphomonoester.. Its function is as follows. Endonuclease that specifically degrades the RNA of RNA-DNA hybrids. The chain is Ribonuclease HII from Geobacillus thermodenitrificans (strain NG80-2).